We begin with the raw amino-acid sequence, 105 residues long: Cell division protein FtsB (105 aa).

Residues 1–3 are Cytoplasmic-facing; that stretch reads MRI. A helical membrane pass occupies residues 4 to 21; it reads VIYSMLVLLIAIQYPLWL. The Periplasmic segment spans residues 22 to 105; the sequence is GKGGWLKVYE…DTAKASTVKQ (84 aa). Positions 32–60 form a coiled coil; sequence MEKQVELQEAKNSLLALRNAKLEGDVKDL.

The protein belongs to the FtsB family. As to quaternary structure, part of a complex composed of FtsB, FtsL and FtsQ.

Its subcellular location is the cell inner membrane. Its function is as follows. Essential cell division protein. May link together the upstream cell division proteins, which are predominantly cytoplasmic, with the downstream cell division proteins, which are predominantly periplasmic. The protein is Cell division protein FtsB of Polynucleobacter asymbioticus (strain DSM 18221 / CIP 109841 / QLW-P1DMWA-1) (Polynucleobacter necessarius subsp. asymbioticus).